The following is a 348-amino-acid chain: D-alanine--D-alanine ligase (348 aa).

The 209-residue stretch at 136–344 folds into the ATP-grasp domain; the sequence is KSVFKSYNLP…LEKLVANLIE (209 aa). Residue 171-226 participates in ATP binding; the sequence is NKIISYPCFIKPANLGSSVGITKAYSKEEFIAGIEFAAKYDERIIVEKSIEGRELE. The Mg(2+) site is built by Asp297, Glu311, and Asn313.

Belongs to the D-alanine--D-alanine ligase family. Requires Mg(2+) as cofactor. Mn(2+) is required as a cofactor.

The protein localises to the cytoplasm. The enzyme catalyses 2 D-alanine + ATP = D-alanyl-D-alanine + ADP + phosphate + H(+). It functions in the pathway cell wall biogenesis; peptidoglycan biosynthesis. Cell wall formation. The polypeptide is D-alanine--D-alanine ligase (Prochlorococcus marinus (strain NATL2A)).